We begin with the raw amino-acid sequence, 372 residues long: L-lysine 4-hydroxylase (372 aa).

Residues histidine 176, glutamate 178, and histidine 312 each coordinate Fe cation.

It belongs to the clavaminate synthase family. Fe(2+) is required as a cofactor.

It catalyses the reaction L-lysine + 2-oxoglutarate + O2 = (4R)-4-hydroxy-L-lysine + succinate + CO2. In terms of biological role, alpha-ketoglutarate-dependent dioxygenase that in vitro catalyzes the regio- and stereoselective hydroxylation of L-lysine, leading to (4R)-4-hydroxy-L-lysine. This Flavobacterium sp. (strain CF136) protein is L-lysine 4-hydroxylase.